The primary structure comprises 178 residues: ATP synthase subunit delta (178 aa).

The protein belongs to the ATPase delta chain family. In terms of assembly, F-type ATPases have 2 components, F(1) - the catalytic core - and F(0) - the membrane proton channel. F(1) has five subunits: alpha(3), beta(3), gamma(1), delta(1), epsilon(1). F(0) has three main subunits: a(1), b(2) and c(10-14). The alpha and beta chains form an alternating ring which encloses part of the gamma chain. F(1) is attached to F(0) by a central stalk formed by the gamma and epsilon chains, while a peripheral stalk is formed by the delta and b chains.

It localises to the cell membrane. Its function is as follows. F(1)F(0) ATP synthase produces ATP from ADP in the presence of a proton or sodium gradient. F-type ATPases consist of two structural domains, F(1) containing the extramembraneous catalytic core and F(0) containing the membrane proton channel, linked together by a central stalk and a peripheral stalk. During catalysis, ATP synthesis in the catalytic domain of F(1) is coupled via a rotary mechanism of the central stalk subunits to proton translocation. Functionally, this protein is part of the stalk that links CF(0) to CF(1). It either transmits conformational changes from CF(0) to CF(1) or is implicated in proton conduction. The sequence is that of ATP synthase subunit delta from Mycoplasma pneumoniae (strain ATCC 29342 / M129 / Subtype 1) (Mycoplasmoides pneumoniae).